Consider the following 109-residue polypeptide: Anti-sigma-B factor antagonist (109 aa).

Positions 3 to 109 (INVDVKQNEN…ISAKSEGGVQ (107 aa)) constitute an STAS domain. Phosphoserine is present on residues S52 and S56. T57 carries the post-translational modification Phosphothreonine.

Belongs to the anti-sigma-factor antagonist family. Monomer. In stressed cells, forms a complex with RsbW. The predominant form of this complex has a stoichiometry of 2:2 (one dimer of RsbW is bound by two monomers of RsbV). Binds to RsbW in the presence of low levels of ATP or under conditions of energy or environmental stress (through dephosphorylation by RsbP or RsbU). In terms of processing, phosphorylated by RsbW on a serine residue. Dephosphorylated by RsbP or RsbU.

Positive regulator of sigma-B activity. Non-phosphorylated RsbV binds to RsbW, preventing its association with sigma-B. When phosphorylated, releases RsbW, which is then free to complex with and inactivate sigma-B. The sequence is that of Anti-sigma-B factor antagonist (rsbV) from Bacillus subtilis (strain 168).